The sequence spans 168 residues: ATP synthase subunit b (168 aa).

Residues 9–29 (AIPFGTIAYTLFIFLLLLVML) traverse the membrane as a helical segment.

Belongs to the ATPase B chain family. As to quaternary structure, F-type ATPases have 2 components, F(1) - the catalytic core - and F(0) - the membrane proton channel. F(1) has five subunits: alpha(3), beta(3), gamma(1), delta(1), epsilon(1). F(0) has three main subunits: a(1), b(2) and c(10-14). The alpha and beta chains form an alternating ring which encloses part of the gamma chain. F(1) is attached to F(0) by a central stalk formed by the gamma and epsilon chains, while a peripheral stalk is formed by the delta and b chains.

It localises to the cell membrane. Functionally, f(1)F(0) ATP synthase produces ATP from ADP in the presence of a proton or sodium gradient. F-type ATPases consist of two structural domains, F(1) containing the extramembraneous catalytic core and F(0) containing the membrane proton channel, linked together by a central stalk and a peripheral stalk. During catalysis, ATP synthesis in the catalytic domain of F(1) is coupled via a rotary mechanism of the central stalk subunits to proton translocation. In terms of biological role, component of the F(0) channel, it forms part of the peripheral stalk, linking F(1) to F(0). The polypeptide is ATP synthase subunit b (Bacillus cereus (strain ATCC 10987 / NRS 248)).